Here is a 4662-residue protein sequence, read N- to C-terminus: Protein PF3D7_1417600 (4662 aa).

A run of 2 helical transmembrane segments spans residues 136–156 (INYV…YLYI) and 161–181 (YIYY…FHII). An LRR 1 repeat occupies 466 to 489 (IKNIDSINKNHKRLIKISNYNITN). Residues 583 to 710 (YRNDGDVNNK…KMKPDNTLNE (128 aa)) form a disordered region. The span at 590 to 644 (NNKNGYNNNEHSNSSNERSNNNGDNNNNNHNNNNHNNNHHNNGSNNHNGNNNSNN) shows a compositional bias: low complexity. Residues 650-666 (DDDKKGNDKKNEDKDDE) show a composition bias toward basic and acidic residues. Positions 690–701 (KKRKEKSKNKNK) are enriched in basic residues. An HSA domain is found at 783-856 (YKPTEPVNIF…ISNDIKMFWF (74 aa)). A disordered region spans residues 942 to 967 (GLMNKMSHQNGKNNNHNDYNNKCEDN). An LRR 2 repeat occupies 1150-1172 (NVHINHIQYDDNNLYYNDDLYNY). Positions 1505–1524 (NNNNNSNNNNSNSNNNSNSN) are enriched in low complexity. Disordered stretches follow at residues 1505–1540 (NNNN…NNSS) and 1705–1761 (KINS…NEKD). Over residues 1710–1761 (NNDKSDDKNDDKNDKKNDGKNDKNDEKDDNKTGEKGDNKIGEKDDNKINEKD) the composition is skewed to basic and acidic residues. 2 LRR repeats span residues 2063–2086 (ITKV…MFNK) and 2129–2153 (DEEI…NVKD). The segment at 2228 to 2261 (KNKSNKKKRAKKNIKLGEEENESECNNEGECNNE) is disordered. Residues 2230–2241 (KSNKKKRAKKNI) show a composition bias toward basic residues. A compositionally biased stretch (acidic residues) spans 2246-2261 (EENESECNNEGECNNE). 4 LRR repeats span residues 2672 to 2695 (LDKL…KTID), 2773 to 2796 (NTVL…TVDI), 2864 to 2888 (INDD…VNNN), and 2904 to 2929 (ANNI…YNNS). The tract at residues 2956 to 2975 (MNNTKQRSHSSYHTSFPMQN) is disordered. LRR repeat units follow at residues 3377–3400 (QNNM…NITM), 3438–3461 (NNSM…YNNS), 3756–3781 (SQRL…NINN), 3935–3960 (QPNI…NINN), 3965–3985 (QPNI…SMNQ), and 3986–4010 (PNIN…NINN). The stretch at 4203 to 4272 (DMNQQERLQQ…ERLQQKWEQQ (70 aa)) forms a coiled coil. LRR repeat units follow at residues 4296–4321 (YQEL…IFLK) and 4333–4357 (QKMH…SLQQ). The tract at residues 4384-4412 (QMNHQQINKHQMNQQQMNKQQMNQQQINQ) is disordered.

It is found in the membrane. The chain is Protein PF3D7_1417600 from Plasmodium falciparum (isolate 3D7).